The sequence spans 338 residues: 1-aminocyclopropane-1-carboxylate deaminase (338 aa).

K51 is modified (N6-(pyridoxal phosphate)lysine). S78 acts as the Nucleophile in catalysis.

It belongs to the ACC deaminase/D-cysteine desulfhydrase family. Homotrimer. Pyridoxal 5'-phosphate serves as cofactor.

The enzyme catalyses 1-aminocyclopropane-1-carboxylate + H2O = 2-oxobutanoate + NH4(+). In terms of biological role, catalyzes a cyclopropane ring-opening reaction, the irreversible conversion of 1-aminocyclopropane-1-carboxylate (ACC) to ammonia and alpha-ketobutyrate. Allows growth on ACC as a nitrogen source. This chain is 1-aminocyclopropane-1-carboxylate deaminase, found in Pseudomonas fluorescens.